A 206-amino-acid chain; its full sequence is LexA repressor (206 aa).

Residues 28–48 (VREIGEAVGLASSSTVHGHLA) constitute a DNA-binding region (H-T-H motif). Active-site for autocatalytic cleavage activity residues include Ser-128 and Lys-166.

This sequence belongs to the peptidase S24 family. Homodimer.

The catalysed reaction is Hydrolysis of Ala-|-Gly bond in repressor LexA.. In terms of biological role, represses a number of genes involved in the response to DNA damage (SOS response), including recA and lexA. In the presence of single-stranded DNA, RecA interacts with LexA causing an autocatalytic cleavage which disrupts the DNA-binding part of LexA, leading to derepression of the SOS regulon and eventually DNA repair. The protein is LexA repressor of Bacillus velezensis (strain DSM 23117 / BGSC 10A6 / LMG 26770 / FZB42) (Bacillus amyloliquefaciens subsp. plantarum).